The sequence spans 2920 residues: MSWNILLILLISNLDEVLAKTLLKLPSNAPPGWLISDLQFQNLIGDSEIATLQPSIFSTNFEVEDGYRIITNTTVTQFHGELFELFLNVKEQNFQRLVTLHVYVDPRGTSQQPATFLSTVYHATVYTSQQPGSTVVFSKPITVRNRKNFVISPISKIDKISKYSSPFSVMTRGKSVDIVMMKQKLEEDDITRHVIFLGAFTEKTGEMIAQTKVIIDVIDSGDVHFLLKSKKSIAKFASAIPANSTVFDVEKRNLSEPLLFHLEEPSRFFKIDQFSGRVSTVLPVGYGTYHIHVVARNQKKQRSDAWLEISVKKEQKLEPMTSSRSRRHLDDIVFRIPENTTMEDIEKKDMKIPLFAGETIGEINVAKEWLKIDDDGKIHLLKPLNYEKTSSIIATVPINGLQSTRTQTIRIHVADIDEPPSFVNSPLPMLAVVPLNPTIGRIVYQFVARDEHGDGDSNVLYKTIDVIPAGSFIVDPKSGVVRTGWSKYERGDTYRISAQAMDLSPSDNTTSQLSEVAILEILADERPPQFAKQEYEVTVSEDNLVDYSVVDVKAQSFRSFEDGRSKGPITYSLEGDTPEDETKWFRIDPSTGIIHLTRLLDFDDPALPKLHKLKVTAREDNRESHVDLTIRIDDVNDNVPTFTRPLYTAQVREDIPLNQTILKVTAVDKDTGDNSRITYSVDNHNFSINSNGEISAKVRLDADQLNERHFVYRFNVTARDHGEPVSLSSSAMIHIRTENTNDESAVFLPTSQYTAFVAEDAQGGTPVIQIQARDADRDEVTYSFMDKNGRSTQKMNLFSIDEHTGLVKLRHGVSAADLAEAENPINLTVIVQDDGSCCVYPSKTHTSYATLLIGIEDVNNNKPEFPDCAKYSDIAKIMEGTYKTDPPTIVKVEATDDDSSANGDIVYSLYYTQSESRKAFVIDRQTGVLTPSPHVVFDRETRPREDVTVKATDRGDRPLIGFCQFSVEVVDINDNSPQFERPSYETSVSRFEAVGTSVITVFAFDNDAAHNAEITYSLEIDTTAGEEHQNDLDFFELVNRRSGEITLIKPIPMKTQKFIFNVIADDNGIPEALQSSAQVTLNVLDKQQKAPKWQTSPDCKPGITVDENVELNKVILRCRAVSSGDSRNSDVIYKLTASGGPGNKAESKFRQFNKFENGNEWVEVVIMEGLDYEQVNNYTLTLTATDMTSRVASTKTFVVEVRDVNDVVPQFTVDLFTGTIDEEMTPNEHLEKTNGKPIVTVKAIDTDSDGPQNEVHYRIVGEANGEETKHFRIDELTGEIFPNEKFDREKIDMYILTVEASDRSVSALPGANGPNKDNVKVQIVINDVNDNAPSFEEQKYIGRVKESEGEGHDVITIKAHDLDKHSNLRYHLIGAGGGRIPFGVRTDSGTIFVKEPLDFEASDQYHLVLIASDGRHNATTNVYIHIEDVNDNAPQFEQQKYATTVIEEDVDIPKVLFNVHATDADQDEKSSRIVYRLEGQGADEVFRIGKYSGTIELVKALDRDPPAGVPSWNFVVQAIDDDGNGLVGYADVQVNVRDINDNSPIFPERLFGYIEENREPIHSDGVYFMDVQARDFDDPTTENANIEYGIVRNKLINGESVFRIDQNTGKIFAMRSLDREISSEREFIIEVRANDRGVPSREGFANVTIKVTDMNDNAPFFEKTRYEGSVEETAPIGAAVMSFSAFDADEEAKDNVFTYQLSEESDYFYVTTDKDSKQSSVGVLRVKQPLDYEDVTQRDGFHLGIRVSDGRHDAEAAVHVALVDRNDHAPHIHGATEHRVREDVPRGTSIGRYTATDRDAGDTARFRINRQSDPKRQFTIDQDGTLRVAHTLDREDIAVYNLIIEAYDNSNNIGRQMVAVYLQDVNDNGPEPYTVPRPCIFRENTPVNQLGTCEIRATDRDTAEFGPPFTMEVSPSFKYSQYLNVIFNANGDGGNGSMTITPLQEFDREAPVPGKILEIPLILADRAGRRNEASVHVIIGDLNDNTMHDGRMTIHVNSYLGRLKETVIGRVYVDDADDWDLGDKTFSWKDSRPGFELSDKGSITMAGEMAAGTYTMSANVHDNARDEDAVGYVTVIVNAVPQIAFDNQGSVQLLIAEETPLQLPDDFIRADSNGQSLMDTFKQEMTAYMGGDVTVDVFSVQVGIATLQTRDVPVLNVRFNARGSTYRDTAQLNGLIAAHRADLQRKLNVEIVGVGIDMCKFTQCDAGCQTLNSADYDGIVVSANSTVIVGVNATSRDDCTCPVWRAPPACQHSLCHNDGVCHNTNPGFFCECRNDGLKGARCQGTTRSFGGNGFAWYKPMPACTSLNISFSFMTTQSDALLFYNGPLETLRNDTHIEYSDYIFIQLRGGRISLEVSMNGQSRSSLEVASTALNDGTWHDISVNQEGKRVELVVDNCRFLGAGADDSSCRAELYTPDDDERLNIVTPVQIGGLAPLSGQDYPQTIPRAGLNGCVRNLNVNGDQYDLATPAFEQNSEKGCRLWGATCDSNSVDSLNHCIHGDCFADVQGSGAMVAKCVCDPGWGGARCERRMEWIQFAQGAFIEYSPRIAFPEQVSDIELLFISGKVNGAPAELSFGTDSQQSYVSTNLESGQNGVTAAGKFDIGTGGRRARQELRVSEVLLKENASYWLQFTRNPTRASLSIDNAYTVSTQLDKGEPFSLQVNQITLGTQGQNKGFQGCIGTYRWSKQNLPLKRGGAMDENEESIVSISNMAGVQDGCDLRITCADLPAGYCGGSFVCVDFWKGPFCTCNDGANAILGDDGQVVGCGETLAVSKLGISSPAIILILVSLALLILLVMMMVVYTRRSPGAFENVRPEEMNRDNLRQYGVEGGGEADNDQYSMAGLRKPVMPLDTGMGPAIGGHPPHYPPRGMAPPKDDHELNSKIKDLETDQNAAPYDELRIYDDERDNISVVTLESIESAQ.

An N-terminal signal peptide occupies residues M1 to A19. At K20 to P2779 the chain is on the extracellular side. N-linked (GlcNAc...) asparagine glycosylation is found at N72, N243, N253, N339, and N508. Cadherin domains follow at residues S322 to F422, S425 to F530, A531 to F642, T643 to F747, P749 to F865, Y871 to F979, E980 to W1093, P1097 to F1211, T1212 to F1335, E1336 to F1436, Q1438 to F1546, E1548 to F1661, E1662 to I1772, and I1772 to T1874. 4 N-linked (GlcNAc...) asparagine glycosylation sites follow: N658, N685, N715, and N826. N-linked (GlcNAc...) asparagine glycosylation is present at N1177. N-linked (GlcNAc...) asparagine glycosylation occurs at N1417. N-linked (GlcNAc...) asparagine glycosylation is present at N1646. N-linked (GlcNAc...) asparagine glycosylation is found at N1935, N2224, and N2232. Residues A2246 to Q2283 enclose the EGF-like 1 domain. 3 cysteine pairs are disulfide-bonded: C2250/C2261, C2255/C2270, and C2272/C2282. The 195-residue stretch at G2284–C2478 folds into the Laminin G-like domain. N2307 and N2332 each carry an N-linked (GlcNAc...) asparagine glycan. Cystine bridges form between C2452–C2478, C2501–C2515, and C2517–C2526. Residues S2492–E2527 form the EGF-like 2 domain. N2623 is a glycosylation site (N-linked (GlcNAc...) asparagine). A helical membrane pass occupies residues A2780 to V2800. At Y2801–Q2920 the chain is on the cytoplasmic side. S2839 bears the Phosphoserine mark. Residues I2858–N2891 form a disordered region. The segment covering P2873–E2887 has biased composition (basic and acidic residues). S2909 carries the post-translational modification Phosphoserine. A Phosphothreonine modification is found at T2912. Residues S2915 and S2918 each carry the phosphoserine modification.

Monomer in solution. Isoform a is a component of a core catenin-cadherin complex consisting of hmr-1, hmp-1 and hmp-2; the complex localizes to adherens junctions. Isoform a interacts with hmp-2; the interaction is direct. Isoform a interacts (via intracellular domain) with jac-1. Post-translationally, phosphorylation at T-2912 increases the binding affinity for hmp-2. Sumoylated. Sumoylation prevents accumulation at adherens junctions and decreases the binding affinity for hmp-2. Expressed in epidermal cells (at protein level). As to expression, neuron-specific.

It localises to the cell membrane. It is found in the cell junction. Its subcellular location is the adherens junction. The protein localises to the cell projection. The protein resides in the dendrite. Its function is as follows. Cadherins are calcium-dependent cell adhesion proteins. They preferentially interact with themselves in a homophilic manner in connecting cells; cadherins may thus contribute to the sorting of heterogeneous cell types. Required for adherens junction assembly and connecting adherens junctions to the cytoskeleton. In terms of biological role, isoform a is required for cell migration during body enclosure and cell shape changes during body elongation. Required for proper localization of other junctional components, such as hmp-1, hmp-2, jac-1 and pac-1. Recruitment of pac-1 is required to establish cell polarity, independent of its role in cell adhesion. Required for primodial germ cell ingression and adherence to endodermal cells during gastrulation. Functionally, isoform b is involved in axonal guidance in a subset of motor neurons. The sequence is that of Cadherin-related hmr-1 from Caenorhabditis elegans.